We begin with the raw amino-acid sequence, 1571 residues long: Phospholipid-transporting ATPase DNF1 (1571 aa).

The disordered stretch occupies residues 1-94 (MSGTFHGDGH…TPKLNNGSGT (94 aa)). Over 1–214 (MSGTFHGDGH…TFLPKNILFQ (214 aa)) the chain is Cytoplasmic. Positions 29–40 (EDTHIAPTHFDD) are enriched in basic and acidic residues. Positions 42–56 (ATSNKYSRPQVSFND) are enriched in polar residues. Serine 53 is modified (phosphoserine). The segment covering 66–76 (AEEFTFNDDTE) has biased composition (acidic residues). At threonine 70 the chain carries Phosphothreonine. Polar residues predominate over residues 80–93 (HSFQPTPKLNNGSG). Serine 81 is subject to Phosphoserine. Phosphothreonine is present on threonine 85. Position 92 is a phosphoserine (serine 92). Threonine 94 is subject to Phosphothreonine. Position 104 is a phosphoserine (serine 104). Residue threonine 109 is modified to Phosphothreonine. A helical transmembrane segment spans residues 215–235 (FHNFANVYFLVLIILGAFQIF). Residues 234–241 (IFGVTNPG) form an involved in phosphatidylcholine substrate selection region. Over 236 to 239 (GVTN) the chain is Extracellular. A helical membrane pass occupies residues 240-260 (PGLSAVPLVVIVIITAIKDAI). At 261–553 (EDSRRTVLDL…RISRELNFSV (293 aa)) the chain is on the cytoplasmic side. 4 positions are modified to phosphoserine: serine 351, serine 354, serine 358, and serine 365. Tyrosine 368 is modified (phosphotyrosine). A helical transmembrane segment spans residues 554–574 (VINFVLLFILCFVSGIANGVY). Over 575 to 594 (YDKKGRSRFSYEFGTIAGSA) the chain is Extracellular. Residues 586-590 (EFGTI) form an involved in phosphatidylcholine substrate selection region. A helical membrane pass occupies residues 595-615 (ATNGFVSFWVAVILYQSLVPI). Over 616–1188 (SLYISVEIIK…WSYKRLAEMI (573 aa)) the chain is Cytoplasmic. Aspartate 667 serves as the catalytic 4-aspartylphosphate intermediate. Positions 667, 668, 669, 801, 842, 844, 847, and 871 each coordinate ATP. Aspartate 667 is a binding site for Mg(2+). Threonine 669 serves as a coordination point for Mg(2+). A Glycyl lysine isopeptide (Lys-Gly) (interchain with G-Cter in ubiquitin) cross-link involves residue lysine 895. The ATP site is built by arginine 909, threonine 910, threonine 989, glycine 990, aspartate 991, arginine 1104, and lysine 1110. Aspartate 1130 serves as a coordination point for Mg(2+). Positions 1133 and 1134 each coordinate ATP. Residue aspartate 1134 coordinates Mg(2+). Residues 1189 to 1209 (PEFFYKNMIFALALFWYGIYN) traverse the membrane as a helical segment. Topologically, residues 1210-1219 (DFDGSYLYEY) are extracellular. The chain crosses the membrane as a helical span at residues 1220–1240 (TYMMFYNLAFTSLPVIFLGIL). The Cytoplasmic portion of the chain corresponds to 1241–1270 (DQDVNDTISLVVPQLYRVGILRKEWNQRKF). A helical transmembrane segment spans residues 1271–1291 (LWYMLDGLYQSIICFFFPYLV). Residues 1292–1307 (YHKNMIVTSNGLGLDH) lie on the Extracellular side of the membrane. The helical transmembrane segment at 1308–1328 (RYFVGVYVTTIAVISCNTYVL) threads the bilayer. Residues 1329–1334 (LHQYRW) are Cytoplasmic-facing. The chain crosses the membrane as a helical span at residues 1335–1355 (DWFSGLFIALSCLVVFAWTGI). Residues 1356-1375 (WSSAIASREFFKAAARIYGA) lie on the Extracellular side of the membrane. The helical transmembrane segment at 1376-1396 (PSFWAVFFVAVLFCLLPRFTY) threads the bilayer. Residue arginine 1393 coordinates a 1,2-diacyl-sn-glycero-3-phospho-L-serine. Residues 1397 to 1571 (DSFQKFFYPT…ASLIGTQQNN (175 aa)) are Cytoplasmic-facing. The residue at position 1506 (serine 1506) is a Phosphoserine. Threonine 1551 carries the phosphothreonine modification. Residues serine 1552 and serine 1563 each carry the phosphoserine modification.

Belongs to the cation transport ATPase (P-type) (TC 3.A.3) family. Type IV subfamily. Component of a flippase complex consisting of DNF1 and LEM3. Interacts with LEM3; the interaction is direct and required for their mutual export from the endoplasmic reticulum. Mg(2+) serves as cofactor. In terms of processing, phosphorylated by FPK1 and KIN82.

Its subcellular location is the cell membrane. It localises to the endosome membrane. The protein localises to the golgi apparatus. It is found in the trans-Golgi network membrane. The protein resides in the cell septum. Its subcellular location is the bud. The enzyme catalyses ATP + H2O + phospholipidSide 1 = ADP + phosphate + phospholipidSide 2.. The catalysed reaction is a 1,2-diacyl-sn-glycero-3-phosphoethanolamine(out) + ATP + H2O = a 1,2-diacyl-sn-glycero-3-phosphoethanolamine(in) + ADP + phosphate + H(+). It catalyses the reaction a 1,2-diacyl-sn-glycero-3-phosphocholine(out) + ATP + H2O = a 1,2-diacyl-sn-glycero-3-phosphocholine(in) + ADP + phosphate + H(+). It carries out the reaction a beta-D-glucosyl-(1&lt;-&gt;1')-N-acylsphing-4-enine(out) + ATP + H2O = a beta-D-glucosyl-(1&lt;-&gt;1')-N-acylsphing-4-enine(in) + ADP + phosphate + H(+). The enzyme catalyses a 1,2-diacyl-sn-glycero-3-phospho-L-serine(out) + ATP + H2O = a 1,2-diacyl-sn-glycero-3-phospho-L-serine(in) + ADP + phosphate + H(+). Its function is as follows. Catalytic component of a P4-ATPase flippase complex which catalyzes the hydrolysis of ATP coupled to the transport of glucosylceramide, phosphatidylcholine, phosphatidylethanolamine, and small amounts of phosphatidylserine from the lumenal to the cytosolic leaflet of the cell membrane and ensures the maintenance of asymmetric distribution of phospholipids. Does not appear to transport sphingomyelin, inositol phosphoceramide, or phosphatidic acid. Required for efficient endocytosis. The chain is Phospholipid-transporting ATPase DNF1 from Saccharomyces cerevisiae (strain ATCC 204508 / S288c) (Baker's yeast).